The chain runs to 595 residues: Aspartate--tRNA(Asp/Asn) ligase (595 aa).

Glutamate 175 is an L-aspartate binding site. The segment at 199–202 (QQFK) is aspartate. L-aspartate contacts are provided by arginine 221 and histidine 451. 221–223 (RDE) contributes to the ATP binding site. Glutamate 485 is an ATP binding site. Arginine 492 is a binding site for L-aspartate. An ATP-binding site is contributed by 537-540 (GVDR).

This sequence belongs to the class-II aminoacyl-tRNA synthetase family. Type 1 subfamily. As to quaternary structure, homodimer.

Its subcellular location is the cytoplasm. It carries out the reaction tRNA(Asx) + L-aspartate + ATP = L-aspartyl-tRNA(Asx) + AMP + diphosphate. Its function is as follows. Aspartyl-tRNA synthetase with relaxed tRNA specificity since it is able to aspartylate not only its cognate tRNA(Asp) but also tRNA(Asn). Reaction proceeds in two steps: L-aspartate is first activated by ATP to form Asp-AMP and then transferred to the acceptor end of tRNA(Asp/Asn). The sequence is that of Aspartate--tRNA(Asp/Asn) ligase from Acidiphilium cryptum (strain JF-5).